Here is a 1947-residue protein sequence, read N- to C-terminus: Sodium channel protein type 3 subunit alpha (1947 aa).

Topologically, residues 1–128 (MAQALLVPPG…KIAIKILVHS (128 aa)) are cytoplasmic. Residues 28–60 (RAAEEKAKKPKKEQDIDDENKPKPNSDLEAGKN) are disordered. Positions 46-57 (ENKPKPNSDLEA) are enriched in basic and acidic residues. One copy of the I repeat lies at 110 to 455 (ILTPLNPVRK…QQMLEQLKKQ (346 aa)). Residues 129–146 (LFSMLIMCTILTNCVFMT) form a helical membrane-spanning segment. Residues 147–152 (LSNPPD) are Extracellular-facing. A helical transmembrane segment spans residues 153 to 174 (WTKNVEYTFTGIYTFESLIKIL). The Cytoplasmic segment spans residues 175 to 188 (ARGFCLEDFTFLRD). Residues 189 to 206 (PWNWLDFSVIVMAYVTEF) form a helical membrane-spanning segment. The Extracellular segment spans residues 207-213 (VDLGNVS). N-linked (GlcNAc...) asparagine glycosylation occurs at Asn-211. Residues 214–235 (ALRTFRVLRALKTISVIPGLKT) traverse the membrane as a helical segment. Residues 236-249 (IVGALIQSVKKLSD) lie on the Cytoplasmic side of the membrane. A helical membrane pass occupies residues 250–269 (VMILTVFCLSVFALIGLQLF). At 270–369 (MGNLRNKCLQ…NYGYTSFDTF (100 aa)) the chain is on the extracellular side. 5 N-linked (GlcNAc...) asparagine glycosylation sites follow: Asn-290, Asn-296, Asn-302, Asn-307, and Asn-339. Residues 370–386 (SWAFLSLFRLMTQDYWE) constitute an intramembrane region (pore-forming). At 387–397 (NLYQLTLRAAG) the chain is on the extracellular side. Residues 398 to 424 (KTYMIFFVLVIFLGSFYLVNLILAVVA) form a helical membrane-spanning segment. Residues 425–712 (MAYEEQNQAT…LVNLIVMDPF (288 aa)) lie on the Cytoplasmic side of the membrane. Phosphoserine is present on residues Ser-484, Ser-485, and Ser-486. Disordered regions lie at residues 493–529 (SKSA…SESE) and 587–632 (VGSE…ETEV). Over residues 500–509 (RNRRKKRRQR) the composition is skewed to basic residues. 2 stretches are compositionally biased toward basic and acidic residues: residues 510–529 (EHLE…SESE) and 596–622 (DEHS…ERRN). The stretch at 693–965 (CCDSWLKVKH…QIAVGRMQKG (273 aa)) is one II repeat. A helical membrane pass occupies residues 713-730 (VDLAITICIVLNTLFMAM). The Extracellular segment spans residues 731–738 (EHYPMTEQ). The chain crosses the membrane as a helical span at residues 739 to 763 (FSSVLTVGNLVFTGIFTAEMVLKII). The Cytoplasmic segment spans residues 764 to 773 (AMDPYYYFQE). Residues 774–793 (GWNIFDGIIVSLSLMELGLA) traverse the membrane as a helical segment. The Extracellular segment spans residues 794–797 (NVEG). Residues 798–816 (LSVLRSFRLLRVFKLAKSW) form a helical membrane-spanning segment. At 817–834 (PTLNMLIKIIGNSVGALG) the chain is on the cytoplasmic side. Residues 835 to 855 (NLTLVLAIIVFIFAVVGMQLF) traverse the membrane as a helical segment. The Extracellular segment spans residues 856-880 (GKSYKECVCKINEDCKLPRWHMNDF). An intrachain disulfide couples Cys-864 to Cys-870. Residues 881-896 (FHSFLIVFRVLCGEWI) constitute an intramembrane region (pore-forming). The Extracellular segment spans residues 897-907 (ETMWDCMEVAG). A disulfide bridge connects residues Cys-902 and Cys-911. A helical transmembrane segment spans residues 908-934 (QTMCLIVFMLVMVIGNLVVLNLFLALL). The Cytoplasmic portion of the chain corresponds to 935–1157 (LSSFSSDNLA…RKTCYSIVEH (223 aa)). Positions 1070 to 1113 (EEFSSESELEESKEKLNATSSSEGSTVDVAPPREGEQAEIEPEE) are disordered. The stretch at 1140–1451 (KGKIWWNLRK…KKYYNAMKKL (312 aa)) is one III repeat. A helical membrane pass occupies residues 1158-1178 (NWFETFIVFMILLSSGALAFE). Residues 1179–1190 (DIYIEQRKTIKT) lie on the Extracellular side of the membrane. A helical membrane pass occupies residues 1191–1212 (MLEYADKVFTYIFILEMLLKWV). Residues 1213-1218 (AYGFQT) lie on the Cytoplasmic side of the membrane. A helical transmembrane segment spans residues 1219–1244 (YFTNAWCWLDFLIVDVSLVSLVANAL). Residues 1245–1253 (GYSELGAIK) are Extracellular-facing. A helical transmembrane segment spans residues 1254-1272 (SLRTLRALRPLRALSRFEG). Residues 1273-1285 (MRVVVNALVGAIP) lie on the Cytoplasmic side of the membrane. Residues 1286-1308 (SIMNVLLVCLIFWLIFSIMGVNL) traverse the membrane as a helical segment. The Extracellular portion of the chain corresponds to 1309 to 1354 (FAGKFYHCVNMTTGSMFDMSEVNNFSDCQALGKQARWKNVKVNFDN). The cysteines at positions 1316 and 1336 are disulfide-linked. Asn-1318 and Asn-1332 each carry an N-linked (GlcNAc...) asparagine glycan. The segment at residues 1355–1371 (VGAGYLALLQVATFKGW) is an intramembrane region (pore-forming). The Extracellular segment spans residues 1372–1394 (MDIMYAAVDSRDVKLQPVYEENL). Residues 1395-1420 (YMYLYFVIFIIFGSFFTLNLFIGVII) traverse the membrane as a helical segment. Over 1421 to 1478 (DNFNQQKKKFGGQDIFMTEEQKKYYNAMKKLGSKKPQKPIPRPANKFQGMVFDFVTRQ) the chain is Cytoplasmic. The residue at position 1453 (Ser-1453) is a Phosphoserine. The IV repeat unit spans residues 1460 to 1758 (IPRPANKFQG…WEKFDPDATQ (299 aa)). The chain crosses the membrane as a helical span at residues 1479-1497 (VFDISIMILICLNMVTMMV). Residues 1498–1505 (ETDDQSKY) lie on the Extracellular side of the membrane. The chain crosses the membrane as a helical span at residues 1506 to 1529 (MTLVLSRINLVFIVLFTGEFLLKL). The Cytoplasmic segment spans residues 1530–1539 (ISLRYYYFTI). A helical membrane pass occupies residues 1540-1557 (GWNIFDFVVVILSIVGMF). Residues 1558–1569 (LAELIEKYFVSP) are Extracellular-facing. A helical membrane pass occupies residues 1570 to 1592 (TLFRVIRLARIGRILRLIKGAKG). Residues 1593–1605 (IRTLLFALMMSLP) lie on the Cytoplasmic side of the membrane. The chain crosses the membrane as a helical span at residues 1606–1629 (ALFNIGLLLFLVMFIYAIFGMSNF). At 1630–1651 (AYVKKEAGIDDMFNFETFGNSM) the chain is on the extracellular side. Residues 1652-1664 (ICLFQITTSAGWD) constitute an intramembrane region (pore-forming). Topologically, residues 1665-1696 (GLLAPILNSAPPDCDPDAIHPGSSVKGDCGNP) are extracellular. Residues 1697–1722 (SVGIFFFVSYIIISFLVVVNMYIAVI) traverse the membrane as a helical segment. Residues 1723-1947 (LENFSVATEE…PEKESKGKEV (225 aa)) lie on the Cytoplasmic side of the membrane. Residues 1852–1881 (EEVSAAIIQRNYRCYLLKQRLKNISNTYDK) enclose the IQ domain. Residues 1901–1947 (LNGNSTPEKTDGSSSTTSPPSYDSVTKPDKEKFEKDKPEKESKGKEV) are disordered. Positions 1926–1947 (TKPDKEKFEKDKPEKESKGKEV) are enriched in basic and acidic residues.

It belongs to the sodium channel (TC 1.A.1.10) family. Nav1.3/SCN3A subfamily. Heterooligomer of an alpha subunit, SCN3A, and 1 to 3 regulatory beta subunits including SCN1B and SCN2B; disulfide-linked with some beta subunits like SCN2B. Interacts with NEDD4L; could regulate expression of SCN3A at the plasma membrane through ubiquitination-regulated endocytosis. Post-translationally, may be ubiquitinated by NEDD4L; which would promote its endocytosis. Phosphorylation at Ser-1453 in a highly conserved cytoplasmic loop slows inactivation of the channel and reduces peak sodium currents. As to expression, expressed in enterochromaffin cells in both colon and small bowel (at protein level). Expressed in pancreatic alpha and beta cells.

It localises to the cell membrane. It is found in the basal cell membrane. The catalysed reaction is Na(+)(in) = Na(+)(out). Functionally, pore-forming subunit of Nav1.3, a voltage-gated sodium (Nav) channel that directly mediates the depolarizing phase of action potentials in excitable membranes. Navs, also called VGSCs (voltage-gated sodium channels) or VDSCs (voltage-dependent sodium channels), operate by switching between closed and open conformations depending on the voltage difference across the membrane. In the open conformation they allow Na(+) ions to selectively pass through the pore, along their electrochemical gradient. The influx of Na+ ions provokes membrane depolarization, initiating the propagation of electrical signals throughout cells and tissues. In some secretory cell types, it also participates in cell excitability through membrane depolarization and regulates cells responsiveness to stimuli triggering secretion. For instance, it controls the release of serotonin/5-hydroxytryptamine by enterochromaffin cells and is required for both glucagon- and glucose-induced insulin secretion in pancreatic endocrine cells. This is Sodium channel protein type 3 subunit alpha from Mus musculus (Mouse).